The chain runs to 885 residues: Probable LRR receptor-like serine/threonine-protein kinase At1g51820 (885 aa).

An N-terminal signal peptide occupies residues methionine 1 to alanine 20. The Extracellular portion of the chain corresponds to glutamine 21–proline 509. Asparagine 22, asparagine 93, asparagine 135, asparagine 194, asparagine 228, asparagine 250, asparagine 254, asparagine 281, asparagine 287, asparagine 424, asparagine 437, asparagine 456, and asparagine 461 each carry an N-linked (GlcNAc...) asparagine glycan. LRR repeat units follow at residues isoleucine 403–asparagine 424, histidine 427–alanine 447, and serine 451–lysine 473. The chain crosses the membrane as a helical span at residues valine 510 to leucine 530. The Cytoplasmic portion of the chain corresponds to arginine 531–arginine 885. Residues asparagine 578 to leucine 851 enclose the Protein kinase domain. ATP-binding positions include leucine 584–valine 592 and lysine 606. Tyrosine 651 is subject to Phosphotyrosine. Catalysis depends on aspartate 703, which acts as the Proton acceptor. At serine 737 the chain carries Phosphoserine. Threonine 738 and threonine 743 each carry phosphothreonine. Tyrosine 751 carries the phosphotyrosine modification.

This sequence belongs to the protein kinase superfamily. Ser/Thr protein kinase family.

Its subcellular location is the membrane. The catalysed reaction is L-seryl-[protein] + ATP = O-phospho-L-seryl-[protein] + ADP + H(+). The enzyme catalyses L-threonyl-[protein] + ATP = O-phospho-L-threonyl-[protein] + ADP + H(+). This chain is Probable LRR receptor-like serine/threonine-protein kinase At1g51820, found in Arabidopsis thaliana (Mouse-ear cress).